The primary structure comprises 253 residues: 5'-nucleotidase SurE (253 aa).

Residues Asp-8, Asp-9, Ser-39, and Asn-92 each coordinate a divalent metal cation.

The protein belongs to the SurE nucleotidase family. A divalent metal cation serves as cofactor.

It localises to the cytoplasm. It catalyses the reaction a ribonucleoside 5'-phosphate + H2O = a ribonucleoside + phosphate. Functionally, nucleotidase that shows phosphatase activity on nucleoside 5'-monophosphates. This is 5'-nucleotidase SurE from Burkholderia thailandensis (strain ATCC 700388 / DSM 13276 / CCUG 48851 / CIP 106301 / E264).